The sequence spans 506 residues: Subtilisin-like serine protease Cur l 4.0101 (506 aa).

A signal peptide spans 1–15 (MKYSLIAALPALAAA). Positions 16–135 (SPTFSTETIH…IERDSEVRIL (120 aa)) are cleaved as a propeptide — removed in mature form. Residues 43-134 (SYMVVFKKHV…YIERDSEVRI (92 aa)) form the Inhibitor I9 domain. The interval 59–79 (HDWVQSVHSKNTQERMELRKR) is disordered. Over residues 69–79 (NTQERMELRKR) the composition is skewed to basic and acidic residues. Residues 147-453 (PWGLARISHR…GGSSNYTDII (307 aa)) form the Peptidase S8 domain. Catalysis depends on charge relay system residues aspartate 183 and histidine 215. N-linked (GlcNAc...) asparagine glycans are attached at residues asparagine 245 and asparagine 285. Serine 381 (charge relay system) is an active-site residue. Asparagine 448 carries an N-linked (GlcNAc...) asparagine glycan. Positions 459–506 (TVKKAASKEEEKESEFRITIPSLSELEDDFEKAKESAGRKAHHVGGKL) are cleaved as a propeptide — removed in mature form.

This sequence belongs to the peptidase S8 family.

Serine protease. The sequence is that of Subtilisin-like serine protease Cur l 4.0101 from Cochliobolus lunatus (Filamentous fungus).